A 232-amino-acid chain; its full sequence is Succinyl-CoA:3-ketoacid coenzyme A transferase subunit A (232 aa).

24 to 30 (GGFGLCG) lines the CoA pocket.

This sequence belongs to the 3-oxoacid CoA-transferase subunit A family. In terms of assembly, heterodimer of a subunit A and a subunit B.

The enzyme catalyses a 3-oxo acid + succinyl-CoA = a 3-oxoacyl-CoA + succinate. The protein is Succinyl-CoA:3-ketoacid coenzyme A transferase subunit A (scoA) of Helicobacter pylori (strain ATCC 700392 / 26695) (Campylobacter pylori).